The sequence spans 327 residues: Malate dehydrogenase (327 aa).

11-17 provides a ligand contact to NAD(+); it reads GAAGQIA. The substrate site is built by arginine 92 and arginine 98. Residues asparagine 105, glutamine 112, and 128–130 each bind NAD(+); that span reads VGN. Substrate contacts are provided by asparagine 130 and arginine 160. The active-site Proton acceptor is histidine 185.

The protein belongs to the LDH/MDH superfamily. MDH type 2 family.

The enzyme catalyses (S)-malate + NAD(+) = oxaloacetate + NADH + H(+). Catalyzes the reversible oxidation of malate to oxaloacetate. In Magnetococcus marinus (strain ATCC BAA-1437 / JCM 17883 / MC-1), this protein is Malate dehydrogenase.